The following is a 423-amino-acid chain: Gamma-glutamyl phosphate reductase (423 aa).

This sequence belongs to the gamma-glutamyl phosphate reductase family.

It is found in the cytoplasm. The enzyme catalyses L-glutamate 5-semialdehyde + phosphate + NADP(+) = L-glutamyl 5-phosphate + NADPH + H(+). The protein operates within amino-acid biosynthesis; L-proline biosynthesis; L-glutamate 5-semialdehyde from L-glutamate: step 2/2. Its function is as follows. Catalyzes the NADPH-dependent reduction of L-glutamate 5-phosphate into L-glutamate 5-semialdehyde and phosphate. The product spontaneously undergoes cyclization to form 1-pyrroline-5-carboxylate. The sequence is that of Gamma-glutamyl phosphate reductase from Burkholderia lata (strain ATCC 17760 / DSM 23089 / LMG 22485 / NCIMB 9086 / R18194 / 383).